The sequence spans 128 residues: Large ribosomal subunit protein bL17 (128 aa).

This sequence belongs to the bacterial ribosomal protein bL17 family. As to quaternary structure, part of the 50S ribosomal subunit. Contacts protein L32.

The protein is Large ribosomal subunit protein bL17 of Streptococcus pyogenes serotype M5 (strain Manfredo).